Reading from the N-terminus, the 519-residue chain is Polyamine aminopropyltransferase (519 aa).

A run of 7 helical transmembrane segments spans residues 17-37 (LLLVSVAICAASGLVYELALV), 53-73 (LIVAGYVAALGVGAILVKPFL), 86-106 (LLGLIGGLSALVLYMTFAVVG), 109-129 (LWMLVLATALIGILVGAELPL), 158-178 (LGALLGGLAWPFILLPWLGMM), 180-200 (GAAAAGMINLLAALFVGCVLL), and 208-228 (QFIRAVVALLVAIAVLGTVLV). Residues 200 to 463 (LRHLLPRAQF…FQLCGPEGTE (264 aa)) form a spermidine synthase region. The PABS domain occupies 225–459 (TVLVRSDGIV…GDWGFQLCGP (235 aa)). S-methyl-5'-thioadenosine is bound at residue Gln-255. Asp-307 is a binding site for spermidine. S-methyl-5'-thioadenosine contacts are provided by residues Glu-326 and 358–359 (DA). The active-site Proton acceptor is the Asp-379.

Belongs to the spermidine/spermine synthase family. In terms of assembly, homodimer or homotetramer.

It localises to the cell membrane. The catalysed reaction is S-adenosyl 3-(methylsulfanyl)propylamine + putrescine = S-methyl-5'-thioadenosine + spermidine + H(+). It participates in amine and polyamine biosynthesis; spermidine biosynthesis; spermidine from putrescine: step 1/1. Catalyzes the irreversible transfer of a propylamine group from the amino donor S-adenosylmethioninamine (decarboxy-AdoMet) to putrescine (1,4-diaminobutane) to yield spermidine. This Corynebacterium efficiens (strain DSM 44549 / YS-314 / AJ 12310 / JCM 11189 / NBRC 100395) protein is Polyamine aminopropyltransferase.